The sequence spans 123 residues: Ribonuclease P protein component 2 (123 aa).

This sequence belongs to the eukaryotic/archaeal RNase P protein component 2 family. As to quaternary structure, consists of a catalytic RNA component and at least 4-5 protein subunits.

It localises to the cytoplasm. The catalysed reaction is Endonucleolytic cleavage of RNA, removing 5'-extranucleotides from tRNA precursor.. Part of ribonuclease P, a protein complex that generates mature tRNA molecules by cleaving their 5'-ends. The chain is Ribonuclease P protein component 2 from Sulfurisphaera tokodaii (strain DSM 16993 / JCM 10545 / NBRC 100140 / 7) (Sulfolobus tokodaii).